A 273-amino-acid polypeptide reads, in one-letter code: Protein GMH1 (273 aa).

A disordered region spans residues 1–33 (MSYLPTYSNDLPAGPQGQRRRNNGNENDARQGY). An N-acetylserine modification is found at serine 2. The Cytoplasmic segment spans residues 2 to 89 (SYLPTYSNDL…QTKNQWARDD (88 aa)). A helical membrane pass occupies residues 90 to 110 (PSFFIFQIALISLSSIIWSIY). Residues 111 to 134 (NSGFNNDSDMGALSIIGHFFKSLV) lie on the Lumenal side of the membrane. Residues 135 to 155 (MMVILDFFIFGFIMATIFYLL) traverse the membrane as a helical segment. Topologically, residues 156-175 (LNRSHFKFKSSQNSVVEWAY) are cytoplasmic. Residues 176–196 (CFDVHCNSFLIILLCLYFIQF) form a helical membrane-spanning segment. Over 197-216 (LLLPIINLQNWISLLIGNSL) the chain is Lumenal. The chain crosses the membrane as a helical span at residues 217 to 237 (YCFAIGHYFILTFYGYNQLPF). At 238 to 242 (LKNLN) the chain is on the cytoplasmic side. A helical membrane pass occupies residues 243 to 263 (FILLPTLGLSIIYLISLFGID). At 264–273 (LSKKLSFYNY) the chain is on the lumenal side.

It belongs to the unc-50 family. As to quaternary structure, interacts with GEA1 and GEA2.

The protein localises to the golgi apparatus membrane. It localises to the endoplasmic reticulum membrane. The sequence is that of Protein GMH1 (GMH1) from Saccharomyces cerevisiae (strain ATCC 204508 / S288c) (Baker's yeast).